Reading from the N-terminus, the 156-residue chain is D-aminoacyl-tRNA deacylase (156 aa).

Residues 142-143 carry the Gly-cisPro motif, important for rejection of L-amino acids motif; that stretch reads GP.

This sequence belongs to the DTD family. As to quaternary structure, homodimer.

Its subcellular location is the cytoplasm. The enzyme catalyses glycyl-tRNA(Ala) + H2O = tRNA(Ala) + glycine + H(+). It carries out the reaction a D-aminoacyl-tRNA + H2O = a tRNA + a D-alpha-amino acid + H(+). Its function is as follows. An aminoacyl-tRNA editing enzyme that deacylates mischarged D-aminoacyl-tRNAs. Also deacylates mischarged glycyl-tRNA(Ala), protecting cells against glycine mischarging by AlaRS. Acts via tRNA-based rather than protein-based catalysis; rejects L-amino acids rather than detecting D-amino acids in the active site. By recycling D-aminoacyl-tRNA to D-amino acids and free tRNA molecules, this enzyme counteracts the toxicity associated with the formation of D-aminoacyl-tRNA entities in vivo and helps enforce protein L-homochirality. This chain is D-aminoacyl-tRNA deacylase, found in Cupriavidus metallidurans (strain ATCC 43123 / DSM 2839 / NBRC 102507 / CH34) (Ralstonia metallidurans).